A 251-amino-acid polypeptide reads, in one-letter code: Vacuolar protein sorting-associated protein 37D (251 aa).

The region spanning 93 to 182 (AENCADKLQR…RRRERSAQPA (90 aa)) is the VPS37 C-terminal domain. Residues 174–251 (RRERSAQPAP…RPSQPEPPHR (78 aa)) are disordered. The segment covering 221–251 (PVPPLKGSPGCPLGPAPLLSPRPSQPEPPHR) has biased composition (pro residues).

It belongs to the VPS37 family. In terms of assembly, component of the ESCRT-I complex (endosomal sorting complex required for transport I) which consists of TSG101, VPS28, a VPS37 protein (VPS37A to -D) and MVB12A or MVB12B in a 1:1:1:1 stoichiometry. Interacts with TSG101 and MVB12A. Component of the ESCRT-I complex (endosomal sorting complex required for transport I) which consists of TSG101, VPS28, a VPS37 protein (VPS37A to -D) and UBAP1 in a 1:1:1:1 stoichiometry.

It is found in the late endosome membrane. In terms of biological role, component of the ESCRT-I complex, a regulator of vesicular trafficking process. Required for the sorting of endocytic ubiquitinated cargos into multivesicular bodies. May be involved in cell growth and differentiation. This is Vacuolar protein sorting-associated protein 37D from Homo sapiens (Human).